We begin with the raw amino-acid sequence, 99 residues long: uncharacterized protein (99 aa).

The chain crosses the membrane as a helical span at residues Val76–Leu96.

The protein resides in the host membrane. This is an uncharacterized protein from Haemophilus phage HP1 (strain HP1c1) (Bacteriophage HP1).